Consider the following 122-residue polypeptide: Ribosome-binding factor A (122 aa).

This sequence belongs to the RbfA family. Monomer. Binds 30S ribosomal subunits, but not 50S ribosomal subunits or 70S ribosomes.

It localises to the cytoplasm. Its function is as follows. One of several proteins that assist in the late maturation steps of the functional core of the 30S ribosomal subunit. Associates with free 30S ribosomal subunits (but not with 30S subunits that are part of 70S ribosomes or polysomes). Required for efficient processing of 16S rRNA. May interact with the 5'-terminal helix region of 16S rRNA. The sequence is that of Ribosome-binding factor A from Polaromonas sp. (strain JS666 / ATCC BAA-500).